Here is a 549-residue protein sequence, read N- to C-terminus: Probable amidase (549 aa).

Residues Lys-132 and Ser-209 each act as charge relay system in the active site. Ser-233 acts as the Acyl-ester intermediate in catalysis.

The protein belongs to the amidase family.

It catalyses the reaction a monocarboxylic acid amide + H2O = a monocarboxylate + NH4(+). The polypeptide is Probable amidase (AMD2) (Saccharomyces cerevisiae (strain ATCC 204508 / S288c) (Baker's yeast)).